The chain runs to 432 residues: C2H2 type master regulator of conidiophore development brlA (432 aa).

Disordered stretches follow at residues 22–72 and 238–260; these read SNEC…RTPG and KQHS…ADTP. Over residues 29 to 44 the composition is skewed to low complexity; sequence TSSFSPLESPTPTPTS. Polar residues-rich tracts occupy residues 62–72 and 238–252; these read LPNNTYERTPG and KQHS…CSLG. 2 C2H2-type zinc fingers span residues 320 to 344 and 350 to 375; these read FKCK…MKSH and HVCW…TKTH. Residues 388–432 are disordered; it reads LDENSPDYDPEFRGQLTPDGRPIYGSKLDDPIPGAGDMSLDGWDE.

The protein localises to the nucleus. Functionally, brlA, abaA and wetA are pivotal regulators of conidiophore development and conidium maturation. They act individually and together to regulate their own expression and that of numerous other sporulation-specific genes. Binds promoters of target genes at brlA response elements (BREs) containing the conserved sequence 5'-(C/A)(A/G)AGGG(G/A)-3'. Controls the expression of the conidiophore-specific phenol oxidase ivoB. Controls the expression of the hydrophobin rodA. Mediates the developmental switch from the indeterminate, apical growth pattern of vegetative cells to the budding growth pattern of conidiophores. Expression of brlA leads to activation of abaA, wetA and stuA, cessation of vegetative growth, cellular vacuolization and spore formation. This chain is C2H2 type master regulator of conidiophore development brlA, found in Emericella nidulans (strain FGSC A4 / ATCC 38163 / CBS 112.46 / NRRL 194 / M139) (Aspergillus nidulans).